Here is a 419-residue protein sequence, read N- to C-terminus: MPPSEEIKLRAVSPRPDFKANYLEFANAPAIVRANQKDSYFETVLRDKLQNVIQIFKGQRFTHTHPEEIGVAAKALYLSLTTLLGTKTLGEEYVDLIYVSRDGKRIPRYLARAGFIFAYAILPYFLTRLFRRLKSSSTPKDEVTEEKINKELPISLRIEKYLSNMSYSKVLDTIMNLHIAVFYFSGQFYNISKRFFSMRYAFGHKINKERTPNGNYELLGGLIVLQLVMKSLGGFKGLIGSFTGNDEHDESNLRANNKDIMYGIPSEEEQEEAKQQLGIIDLSDPGQLPYIPESSRQCMLCLSYMTNPTAANCGHCFCWSCIIDWCKERQTVLCVGKKCWNSNCYHCIRLFYIPTLNKICFFFLLSFLSVRAASKEFKSTKEEFAELFNEELADIAGEDPHCPGPFPTGRTLGYFLVVF.

Residues 1–27 (MPPSEEIKLRAVSPRPDFKANYLEFAN) lie on the Peroxisomal matrix side of the membrane. The chain crosses the membrane as a helical span at residues 28–57 (APAIVRANQKDSYFETVLRDKLQNVIQIFK). Glycine 58 is a topological domain (cytoplasmic). The chain crosses the membrane as a helical span at residues 59–80 (QRFTHTHPEEIGVAAKALYLSL). Residues 81–108 (TTLLGTKTLGEEYVDLIYVSRDGKRIPR) lie on the Peroxisomal matrix side of the membrane. The chain crosses the membrane as a helical span at residues 109-141 (YLARAGFIFAYAILPYFLTRLFRRLKSSSTPKD). Topologically, residues 142-158 (EVTEEKINKELPISLRI) are cytoplasmic. The helical transmembrane segment at 159–185 (EKYLSNMSYSKVLDTIMNLHIAVFYFS) threads the bilayer. The Peroxisomal matrix portion of the chain corresponds to 186–215 (GQFYNISKRFFSMRYAFGHKINKERTPNGN). A helical transmembrane segment spans residues 216–235 (YELLGGLIVLQLVMKSLGGF). The Cytoplasmic portion of the chain corresponds to 236–419 (KGLIGSFTGN…RTLGYFLVVF (184 aa)). The Zn(2+) site is built by cysteine 298, cysteine 301, cysteine 313, histidine 315, cysteine 318, cysteine 321, cysteine 334, and cysteine 347. The RING-type zinc-finger motif lies at 298–360 (CMLCLSYMTN…FYIPTLNKIC (63 aa)).

This sequence belongs to the pex2/pex10/pex12 family. As to quaternary structure, component of the peroxisomal translocation complex, composed of at least PEX3, PEX2, PEX10 and PEX12. Interacts with PEX19.

It localises to the peroxisome membrane. It carries out the reaction S-ubiquitinyl-[E2 ubiquitin-conjugating enzyme]-L-cysteine + [acceptor protein]-L-lysine = [E2 ubiquitin-conjugating enzyme]-L-cysteine + N(6)-ubiquitinyl-[acceptor protein]-L-lysine.. It functions in the pathway protein modification; protein ubiquitination. With respect to regulation, the E3 ubiquitin-protein ligase activity is stimulated by PEX12. In terms of biological role, E3 ubiquitin-protein ligase component of the peroxisomal translocation complex. The two types of peroxisomal matrix targeting signals, PTS1 and PTS2, are first recognized in the cytosol by their receptors PEX5 and PEX7, respectively, which then carry the cargo to the peroxisomal membrane. The peroxisomal targeting signal (PTS) receptor-cargo complexes interact with peroxisomal membrane protein (PMP) components of the docking complex. They have then additional downstream interactions with the translocation complex, leading to the transport of fully folded and oligomerized cargo into the peroxisome matrix. The peroxisomal translocation complex forms the retrotranslocation channel with each subunit contributing transmembrane segments that coassemble into an open channel that specifically allows the passage of PEX5 and PEX20 through the peroxisomal membrane. Specifically catalyzes monoubiquitination of PEX5 and/or PEX20 at 'Cys-6' and 'Cys-8', respectively, a modification that acts as a signal for PEX5 or PEX20 export from peroxisomes to the cytosol, thereby promoting PEX5 and PEX20 recycling. This is Peroxisome biogenesis factor 10 from Komagataella pastoris (Yeast).